The primary structure comprises 193 residues: Large ribosomal subunit protein uL18 (193 aa).

Belongs to the universal ribosomal protein uL18 family. In terms of assembly, part of the 50S ribosomal subunit. Contacts the 5S and 23S rRNAs.

Its function is as follows. This is one of the proteins that bind and probably mediate the attachment of the 5S RNA into the large ribosomal subunit, where it forms part of the central protuberance. The sequence is that of Large ribosomal subunit protein uL18 from Methanobrevibacter smithii (strain ATCC 35061 / DSM 861 / OCM 144 / PS).